Consider the following 182-residue polypeptide: Putative manganese efflux pump MntP (182 aa).

6 helical membrane passes run 6-26, 37-57, 71-91, 101-121, 131-151, and 162-182; these read LIPL…VSLG, ILYI…IGMV, HFAG…SSIL, IGIS…SVGL, VITI…GLFI, and YGEI…LFPI.

The protein belongs to the MntP (TC 9.B.29) family.

Its subcellular location is the cell membrane. In terms of biological role, probably functions as a manganese efflux pump. The sequence is that of Putative manganese efflux pump MntP from Bacillus cereus (strain Q1).